Consider the following 244-residue polypeptide: tRNA (guanine-N(7)-)-methyltransferase (244 aa).

S-adenosyl-L-methionine-binding residues include E75, E100, D127, and D150. D150 is a catalytic residue. Residues K154, D186, and 223–226 (TRFE) each bind substrate.

This sequence belongs to the class I-like SAM-binding methyltransferase superfamily. TrmB family.

It carries out the reaction guanosine(46) in tRNA + S-adenosyl-L-methionine = N(7)-methylguanosine(46) in tRNA + S-adenosyl-L-homocysteine. Its pathway is tRNA modification; N(7)-methylguanine-tRNA biosynthesis. In terms of biological role, catalyzes the formation of N(7)-methylguanine at position 46 (m7G46) in tRNA. This chain is tRNA (guanine-N(7)-)-methyltransferase, found in Xylella fastidiosa (strain M12).